The following is a 173-amino-acid chain: Crossover junction endodeoxyribonuclease RuvC (173 aa).

Residues D8, E67, and D139 contribute to the active site. Positions 8, 67, and 139 each coordinate Mg(2+).

Belongs to the RuvC family. As to quaternary structure, homodimer which binds Holliday junction (HJ) DNA. The HJ becomes 2-fold symmetrical on binding to RuvC with unstacked arms; it has a different conformation from HJ DNA in complex with RuvA. In the full resolvosome a probable DNA-RuvA(4)-RuvB(12)-RuvC(2) complex forms which resolves the HJ. Requires Mg(2+) as cofactor.

The protein resides in the cytoplasm. It catalyses the reaction Endonucleolytic cleavage at a junction such as a reciprocal single-stranded crossover between two homologous DNA duplexes (Holliday junction).. In terms of biological role, the RuvA-RuvB-RuvC complex processes Holliday junction (HJ) DNA during genetic recombination and DNA repair. Endonuclease that resolves HJ intermediates. Cleaves cruciform DNA by making single-stranded nicks across the HJ at symmetrical positions within the homologous arms, yielding a 5'-phosphate and a 3'-hydroxyl group; requires a central core of homology in the junction. The consensus cleavage sequence is 5'-(A/T)TT(C/G)-3'. Cleavage occurs on the 3'-side of the TT dinucleotide at the point of strand exchange. HJ branch migration catalyzed by RuvA-RuvB allows RuvC to scan DNA until it finds its consensus sequence, where it cleaves and resolves the cruciform DNA. In Shewanella amazonensis (strain ATCC BAA-1098 / SB2B), this protein is Crossover junction endodeoxyribonuclease RuvC.